Consider the following 352-residue polypeptide: Non-disjunction protein 1 (352 aa).

In terms of assembly, interacts with MPS3.

It localises to the nucleus. The protein resides in the chromosome. Its subcellular location is the telomere. In terms of biological role, required for telomeric clustering (bouquet stage) during meiosis 1 prophase, formation and efficient homolog pairing, meiosis 1 disjunction, and telomere deletion during meiosis. Also promotes meiotic recombination. This chain is Non-disjunction protein 1 (NDJ1), found in Saccharomyces cerevisiae (strain ATCC 204508 / S288c) (Baker's yeast).